We begin with the raw amino-acid sequence, 184 residues long: Probable RNA 2'-phosphotransferase (184 aa).

It belongs to the KptA/TPT1 family.

Removes the 2'-phosphate from RNA via an intermediate in which the phosphate is ADP-ribosylated by NAD followed by a presumed transesterification to release the RNA and generate ADP-ribose 1''-2''-cyclic phosphate (APPR&gt;P). May function as an ADP-ribosylase. The sequence is that of Probable RNA 2'-phosphotransferase from Escherichia coli O9:H4 (strain HS).